A 530-amino-acid chain; its full sequence is Na(+)/H(+) antiporter NhaB (530 aa).

Transmembrane regions (helical) follow at residues 13-33 (FLGKAPDWYKIAILSFLVINP), 34-54 (LVFFFVDPFTAGWLLVVEFIF), 90-110 (LVANIEVLLLLVFMVAGIYFM), 121-141 (ILIGIKSKTALSVAFCFTAAF), 145-165 (FLDALTVIAVVISVAVGFYAI), 205-225 (LLIHAGVGTALGGVMTMVGEP), 241-261 (FIIRMLPITAPVFICGILTCI), 306-326 (GLIAVWLIVGLALHLAAVGLI), 327-347 (GLSVIILATAFTGVIEEHSMG), 351-371 (EEALPFTALLAVFFAVVAVII), 455-475 (GQAAFLFLLTSALAPLIQLSY), and 481-501 (MALPYTIVLALVGMFGIIFFL).

It belongs to the NhaB Na(+)/H(+) (TC 2.A.34) antiporter family.

It is found in the cell inner membrane. The enzyme catalyses 2 Na(+)(in) + 3 H(+)(out) = 2 Na(+)(out) + 3 H(+)(in). In terms of biological role, na(+)/H(+) antiporter that extrudes sodium in exchange for external protons. The polypeptide is Na(+)/H(+) antiporter NhaB (Aliivibrio fischeri (strain MJ11) (Vibrio fischeri)).